The following is a 625-amino-acid chain: Beta-galactosidase large subunit (625 aa).

The Proton donor role is filled by glutamate 465. The active-site Nucleophile is glutamate 533.

Belongs to the glycosyl hydrolase 2 family. Heterodimer of a large (LacL) and a small subunit (LacM).

The catalysed reaction is Hydrolysis of terminal non-reducing beta-D-galactose residues in beta-D-galactosides.. In terms of biological role, component of a beta-galactosidase. The polypeptide is Beta-galactosidase large subunit (Latilactobacillus sakei (Lactobacillus sakei)).